Here is a 165-residue protein sequence, read N- to C-terminus: Small histone ubiquitination factor 1 (165 aa).

A compositionally biased stretch (basic and acidic residues) spans 1–17 (MSSRRNDYHYDGNDHQY). The tract at residues 1–86 (MSSRRNDYHY…STRASFGAAS (86 aa)) is disordered. Composition is skewed to low complexity over residues 29-38 (SFYESSYRSR) and 50-60 (SSYDSPSSSTN). Polar residues predominate over residues 73–86 (PSNNSTRASFGAAS).

Component of the histone H2B ubiquitin ligase complex (HULC) composed of at least brl1, brl2, rhp6 and shf1.

Its subcellular location is the nucleus. It is found in the cytoplasm. The protein resides in the cytoskeleton. It localises to the microtubule organizing center. The protein localises to the spindle pole body. In terms of biological role, component of the histone H2B ubiquitin ligase complex (HULC) which plays a role in transcription regulation by catalyzing the monoubiquitination of histone H2B to form H2BK123ub1. H2BK123ub1 gives a specific tag for epigenetic transcriptional activation and is also a prerequisite for H3K4me and H3K79me formation. This is Small histone ubiquitination factor 1 (shf1) from Schizosaccharomyces pombe (strain 972 / ATCC 24843) (Fission yeast).